We begin with the raw amino-acid sequence, 872 residues long: Dynein regulatory complex subunit 7 (872 aa).

3 disordered regions span residues 1-40 (MEVLKEKVEEEEAAEREEAAERAERGEKTKRPMEVRREET), 231-281 (ESVK…QEEA), and 385-410 (EEEDEGMNDDDDVENLGKEDEDKSFD). Residues 1 to 64 (MEVLKEKVEE…SEIEVSVPEK (64 aa)) adopt a coiled-coil conformation. Basic and acidic residues-rich tracts occupy residues 16 to 40 (REEAAERAERGEKTKRPMEVRREET), 231 to 240 (ESVKEEEKAP), and 248 to 281 (PPRDLTSRFEQEQEMKRQEAIKAEEENRRKQEEA). Residues 254–292 (SRFEQEQEMKRQEAIKAEEENRRKQEEARLLEQENAKTD) adopt a coiled-coil conformation. Positions 385–398 (EEEDEGMNDDDDVE) are enriched in acidic residues. Basic and acidic residues predominate over residues 399-409 (NLGKEDEDKSF). Coiled coils occupy residues 676–706 (LKNEEKLSRHQAWESELEVLEILKLREEEEE) and 780–805 (QRLIDKANLIQARFEKETQELQKKQQ).

It belongs to the DRC7 family. Component of the nexin-dynein regulatory complex (N-DRC). Interacts with TCTE1/DRC5. Interacts with DRC3 and GAS8/DRC4.

The protein resides in the cell projection. It is found in the cilium. Its subcellular location is the flagellum. The protein localises to the cytoplasm. It localises to the cytoskeleton. The protein resides in the cilium axoneme. It is found in the flagellum axoneme. In terms of biological role, component of the nexin-dynein regulatory complex (N-DRC) a key regulator of ciliary/flagellar motility which maintains the alignment and integrity of the distal axoneme and regulates microtubule sliding in motile axonemes. Involved in the regulation of flagellar motility. Essential for male fertility, sperm head morphogenesis and sperm flagellum formation. The sequence is that of Dynein regulatory complex subunit 7 (DRC7) from Bos taurus (Bovine).